Reading from the N-terminus, the 261-residue chain is MNNLFPFLALDKIALQLGPLAIHWYAIFIVGGAALAVWLACKEAPKRNIKVDDIIDFVLFAFPLGIVGARLYYVIFQWSYYSQHPSQIIAIWDGGGAIYGSLIAGAIVLFVFSYYRMIHPLDLLDITIPGVFLAQAMGRWGNFVNQEAYGKIVSNLDWLPPFIRNQMFIEGHYRMPTFLFESIGTLSGFILVMVFRHRIKGLKRGDIFSSYLVWYGAVRFIVEGMRTDSLMLGPARVSQWLSVLLVILGIILFVYRRIKKN.

Transmembrane regions (helical) follow at residues 20–40, 54–74, and 88–108; these read LAIH…VWLA, IIDF…LYYV, and IIAI…GAIV. Position 139 (R139) interacts with a 1,2-diacyl-sn-glycero-3-phospho-(1'-sn-glycerol). 2 consecutive transmembrane segments (helical) span residues 175–195 and 235–255; these read MPTF…VMVF and ARVS…LFVY.

This sequence belongs to the Lgt family.

Its subcellular location is the cell membrane. It catalyses the reaction L-cysteinyl-[prolipoprotein] + a 1,2-diacyl-sn-glycero-3-phospho-(1'-sn-glycerol) = an S-1,2-diacyl-sn-glyceryl-L-cysteinyl-[prolipoprotein] + sn-glycerol 1-phosphate + H(+). It functions in the pathway protein modification; lipoprotein biosynthesis (diacylglyceryl transfer). In terms of biological role, catalyzes the transfer of the diacylglyceryl group from phosphatidylglycerol to the sulfhydryl group of the N-terminal cysteine of a prolipoprotein, the first step in the formation of mature lipoproteins. This chain is Phosphatidylglycerol--prolipoprotein diacylglyceryl transferase, found in Lactococcus lactis subsp. cremoris (strain MG1363).